A 236-amino-acid polypeptide reads, in one-letter code: Ribonuclease 3 (236 aa).

The region spanning 13–138 (TEKVFKISGY…LIGAIYVDGG (126 aa)) is the RNase III domain. Glu-51 contacts Mg(2+). Asp-55 is an active-site residue. Mg(2+)-binding residues include Asn-124 and Glu-127. Glu-127 is an active-site residue. Positions 164-232 (DAKTALQEWA…AKLMLEKVTK (69 aa)) constitute a DRBM domain.

It belongs to the ribonuclease III family. As to quaternary structure, homodimer. Mg(2+) is required as a cofactor.

It is found in the cytoplasm. It catalyses the reaction Endonucleolytic cleavage to 5'-phosphomonoester.. Functionally, digests double-stranded RNA. Involved in the processing of primary rRNA transcript to yield the immediate precursors to the large and small rRNAs (23S and 16S). Processes some mRNAs, and tRNAs when they are encoded in the rRNA operon. Processes pre-crRNA and tracrRNA of type II CRISPR loci if present in the organism. This Anaplasma phagocytophilum (strain HZ) protein is Ribonuclease 3.